Here is a 282-residue protein sequence, read N- to C-terminus: DegV domain-containing protein SpyM3_0586 (282 aa).

In terms of domain architecture, DegV spans 3-280 (LAVITDSTAT…EGAIAFGVTP (278 aa)). Residues Thr-61 and Ser-94 each contribute to the hexadecanoate site.

Its function is as follows. May bind long-chain fatty acids, such as palmitate, and may play a role in lipid transport or fatty acid metabolism. This is DegV domain-containing protein SpyM3_0586 from Streptococcus pyogenes serotype M3 (strain ATCC BAA-595 / MGAS315).